We begin with the raw amino-acid sequence, 780 residues long: MAPYSLLVSRLQKALGARQYHVASVLCQRAKVAMSHFEPNEYIRYDLLEKNINIVRKRLNRPLTLSEKIVYGHLDDPANQEIERGKTYLRLRPDRVAMQDATAQMAMLQFISSGLPKVAVPSTIHCDHLIEAQLGGEKDLRRAKDINQEVYNFLATAGAKYGVGFWRPGSGIIHQIILENYAYPGVLLIGTDSHTPNGGGLGGICIGVGGADAVDVMAGIPWELKCPKVIGVKLTGSLSGWTSPKDVILKVAGILTVKGGTGAIVEYHGPGVDSISCTGMATICNMGAEIGATTSVFPYNHRMKKYLSKTGRADIANLADEFKDHLVPDSGCHYDQLIEINLSELKPHINGPFTPDLAHPVAEVGSVAEKEGWPLDIRVGLIGSCTNSSYEDMGRSAAVAKQALAHGLQCKSQFTITPGSEQIRATIERDGYAQILRDVGGIVLANACGPCIGQWDRKDIKKGEKNTIVTSYNRNFTGRNDANPETHAFVTSPEIVTALAIAGTLKFNPETDFLTGKDGKKFKLEAPDADELPRAEFDPGQDTYQHPPKDSSGQQVDVSPTSQRLQLLEPFDKWDGRDLEDLQILIKVKGKCTTDHISAAGPWLKFRGHLDNISNNLLIGAINVENGKANSVRNAVTQEFGPVPDTARYYKKHGIRWVVIGDENYGEGSSREHAALEPRHLGGRAIITKSFARIHETNLKKQGLLPLTFADPADYNKIHPVDKLTIKGLKDFAPGKPLTCIIKHPNGTQETILLNHTFNETQIEWFRAGSALNRMKELQK.

The N-terminal 27 residues, 1-27 (MAPYSLLVSRLQKALGARQYHVASVLC), are a transit peptide targeting the mitochondrion. Lys-31 carries the N6-succinyllysine modification. An N6-acetyllysine; alternate modification is found at Lys-50. Lys-50 is modified (N6-succinyllysine; alternate). Gln-99 lines the substrate pocket. N6-acetyllysine; alternate occurs at positions 138 and 144. N6-succinyllysine; alternate occurs at positions 138 and 144. 192-194 (DSH) provides a ligand contact to substrate. Lys-233 carries the post-translational modification N6-acetyllysine; alternate. The residue at position 233 (Lys-233) is an N6-succinyllysine; alternate. Residue Cys-385 participates in [4Fe-4S] cluster binding. N6-succinyllysine is present on Lys-411. Residues Cys-448 and Cys-451 each coordinate [4Fe-4S] cluster. 2 residues coordinate substrate: Arg-474 and Arg-479. Residues Lys-517 and Lys-523 each carry the N6-acetyllysine; alternate modification. 2 positions are modified to N6-succinyllysine; alternate: Lys-517 and Lys-523. Positions 524-537 (LEAPDADELPRAEF) are enriched in basic and acidic residues. The segment at 524–560 (LEAPDADELPRAEFDPGQDTYQHPPKDSSGQQVDVSP) is disordered. Residue Lys-549 is modified to N6-succinyllysine. A compositionally biased stretch (polar residues) spans 551-560 (SSGQQVDVSP). A Phosphoserine modification is found at Ser-559. Lys-573 carries the post-translational modification N6-acetyllysine; alternate. At Lys-573 the chain carries N6-succinyllysine; alternate. At Lys-591 the chain carries N6-succinyllysine. The residue at position 605 (Lys-605) is an N6-acetyllysine; alternate. An N6-succinyllysine; alternate modification is found at Lys-605. Arg-607 lines the substrate pocket. Position 628 is an N6-succinyllysine (Lys-628). Ser-670 is modified (phosphoserine). Residue 670 to 671 (SR) participates in substrate binding. Residue Lys-689 is modified to N6-succinyllysine. An N6-acetyllysine; alternate mark is found at Lys-723 and Lys-730. N6-succinyllysine; alternate occurs at positions 723 and 730. Residues Lys-736 and Lys-743 each carry the N6-acetyllysine modification.

It belongs to the aconitase/IPM isomerase family. Monomer. It depends on [4Fe-4S] cluster as a cofactor. In terms of processing, forms covalent cross-links mediated by transglutaminase TGM2, between a glutamine and the epsilon-amino group of a lysine residue, forming homopolymers and heteropolymers.

Its subcellular location is the mitochondrion. The enzyme catalyses citrate = D-threo-isocitrate. The protein operates within carbohydrate metabolism; tricarboxylic acid cycle; isocitrate from oxaloacetate: step 2/2. Functionally, catalyzes the isomerization of citrate to isocitrate via cis-aconitate. The polypeptide is Aconitate hydratase, mitochondrial (ACO2) (Bos taurus (Bovine)).